Here is a 366-residue protein sequence, read N- to C-terminus: Ribosomal RNA large subunit methyltransferase M (366 aa).

S-adenosyl-L-methionine contacts are provided by residues Ser-188, 221–224, Asp-240, Asp-260, and Asp-277; that span reads CPGG. Lys-306 functions as the Proton acceptor in the catalytic mechanism.

It belongs to the class I-like SAM-binding methyltransferase superfamily. RNA methyltransferase RlmE family. RlmM subfamily. As to quaternary structure, monomer.

Its subcellular location is the cytoplasm. The catalysed reaction is cytidine(2498) in 23S rRNA + S-adenosyl-L-methionine = 2'-O-methylcytidine(2498) in 23S rRNA + S-adenosyl-L-homocysteine + H(+). Catalyzes the 2'-O-methylation at nucleotide C2498 in 23S rRNA. The protein is Ribosomal RNA large subunit methyltransferase M of Klebsiella pneumoniae (strain 342).